A 136-amino-acid polypeptide reads, in one-letter code: Large ribosomal subunit protein uL16 (136 aa).

The protein belongs to the universal ribosomal protein uL16 family. Part of the 50S ribosomal subunit.

Functionally, binds 23S rRNA and is also seen to make contacts with the A and possibly P site tRNAs. The polypeptide is Large ribosomal subunit protein uL16 (Haemophilus influenzae (strain 86-028NP)).